The following is a 693-amino-acid chain: MA3 DOMAIN-CONTAINING TRANSLATION REGULATORY FACTOR 2 (693 aa).

Positions 25–60 are disordered; the sequence is SLDPLPQANMAEDLTKSRRHSPIKVEGSEETWGVED. An MI 1 domain is found at 90–211; sequence EYKKKATVIV…PPAFLKKQMK (122 aa). A Nuclear localization signal 1 motif is present at residues 241 to 248; the sequence is EKRWGGTD. MI domains are found at residues 254–375, 389–510, and 560–681; these read DVKA…SLSA, VFKD…EVLN, and EVKE…EDSQ. A Nuclear localization signal 2 motif is present at residues 430-437; the sequence is VKYLITLA. The tract at residues 673 to 693 is disordered; it reads ESFASEDSQSKKQNGSSSSSG. Low complexity predominate over residues 683–693; that stretch reads KKQNGSSSSSG.

Belongs to the PDCD4 family. Binds to EIF4A1. The association with ribosomes is modulated by cellular energy status and TOR activity. As to expression, mostly expressed in reproductive tissues, such as flower buds and flowers, and, to a lower extent, in vegetative tissues, such as leaves, roots and stems.

It localises to the nucleus. Its subcellular location is the cytoplasm. It is found in the cytosol. Involved in target of rapamycin (TOR)-regulated translation control, especially under energy-deficient conditions. This is MA3 DOMAIN-CONTAINING TRANSLATION REGULATORY FACTOR 2 from Arabidopsis thaliana (Mouse-ear cress).